The primary structure comprises 88 residues: Long neurotoxin LNTX-2 (88 aa).

An N-terminal signal peptide occupies residues 1–21 (MKTLLLTLVVVTIVCLDFGYA). 4 cysteine pairs are disulfide-bonded: Cys24-Cys42, Cys35-Cys63, Cys67-Cys78, and Cys79-Cys84.

It belongs to the three-finger toxin family. Long-chain subfamily. Type II alpha-neurotoxin sub-subfamily. In terms of tissue distribution, expressed by the venom gland.

The protein localises to the secreted. Functionally, binds with high affinity to muscular nicotinic acetylcholine receptors (nAChRs), whereas it binds with a low affinity to neuronal alpha-7/CHRNA7 nAChRs. This chain is Long neurotoxin LNTX-2, found in Demansia vestigiata (Lesser black whip snake).